A 138-amino-acid chain; its full sequence is ATP synthase epsilon chain (138 aa).

This sequence belongs to the ATPase epsilon chain family. As to quaternary structure, F-type ATPases have 2 components, CF(1) - the catalytic core - and CF(0) - the membrane proton channel. CF(1) has five subunits: alpha(3), beta(3), gamma(1), delta(1), epsilon(1). CF(0) has three main subunits: a, b and c.

Its subcellular location is the cell inner membrane. Functionally, produces ATP from ADP in the presence of a proton gradient across the membrane. This chain is ATP synthase epsilon chain, found in Endomicrobium trichonymphae.